We begin with the raw amino-acid sequence, 261 residues long: V-type proton ATPase subunit D (261 aa).

S241 is subject to Phosphoserine.

It belongs to the V-ATPase D subunit family. In terms of assembly, V-ATPase is a heteromultimeric enzyme composed of a peripheral catalytic V1 complex (components A to H) attached to an integral membrane V0 proton pore complex (components: a, c, c'', d and e).

It localises to the vacuole membrane. Subunit of the peripheral V1 complex of vacuolar ATPase. V-ATPase is responsible for acidifying a variety of intracellular compartments in eukaryotic cells, thus providing most of the energy required for transport processes in the vacuolar system. This is V-type proton ATPase subunit D (VHA-D) from Arabidopsis thaliana (Mouse-ear cress).